Reading from the N-terminus, the 93-residue chain is Phosphoribosyl-ATP pyrophosphatase (93 aa).

This sequence belongs to the PRA-PH family.

It localises to the cytoplasm. It catalyses the reaction 1-(5-phospho-beta-D-ribosyl)-ATP + H2O = 1-(5-phospho-beta-D-ribosyl)-5'-AMP + diphosphate + H(+). The protein operates within amino-acid biosynthesis; L-histidine biosynthesis; L-histidine from 5-phospho-alpha-D-ribose 1-diphosphate: step 2/9. In Rhodococcus erythropolis (strain PR4 / NBRC 100887), this protein is Phosphoribosyl-ATP pyrophosphatase.